A 445-amino-acid chain; its full sequence is Guanosine nucleotide diphosphate dissociation inhibitor 1 (445 aa).

This sequence belongs to the Rab GDI family. Interacts with the GDP-bound form of RABA5C (via C-terminus). Expressed in roots, rosette leaves, stems, floral buds and siliques.

Functionally, regulates the GDP/GTP exchange reaction of most RAB proteins by inhibiting the dissociation of GDP from them, and the subsequent binding of GTP. The protein is Guanosine nucleotide diphosphate dissociation inhibitor 1 (GDI1) of Arabidopsis thaliana (Mouse-ear cress).